The following is an 85-amino-acid chain: MAKEELIEMQGSVTEVLPDSRFRVTLDNGHQLIAYTGGKMRKHHIRILAGDKVSLEMSPYDLTKGRITFRHLPGRGPGPSSSGSR.

In terms of domain architecture, S1-like spans 1 to 72 (MAKEELIEMQ…TKGRITFRHL (72 aa)).

The protein belongs to the IF-1 family. In terms of assembly, component of the 30S ribosomal translation pre-initiation complex which assembles on the 30S ribosome in the order IF-2 and IF-3, IF-1 and N-formylmethionyl-tRNA(fMet); mRNA recruitment can occur at any time during PIC assembly.

It localises to the cytoplasm. In terms of biological role, one of the essential components for the initiation of protein synthesis. Stabilizes the binding of IF-2 and IF-3 on the 30S subunit to which N-formylmethionyl-tRNA(fMet) subsequently binds. Helps modulate mRNA selection, yielding the 30S pre-initiation complex (PIC). Upon addition of the 50S ribosomal subunit IF-1, IF-2 and IF-3 are released leaving the mature 70S translation initiation complex. This is Translation initiation factor IF-1 2 from Paracidovorax citrulli (strain AAC00-1) (Acidovorax citrulli).